We begin with the raw amino-acid sequence, 633 residues long: tRNA uridine 5-carboxymethylaminomethyl modification enzyme MnmG (633 aa).

Residues 15-20, Val127, and Ser182 each bind FAD; that span reads GAGHAG. 276–290 is an NAD(+) binding site; sequence GPRYCPSIEDKIVRF. Gln373 contacts FAD.

This sequence belongs to the MnmG family. In terms of assembly, homodimer. Heterotetramer of two MnmE and two MnmG subunits. FAD is required as a cofactor.

It is found in the cytoplasm. In terms of biological role, NAD-binding protein involved in the addition of a carboxymethylaminomethyl (cmnm) group at the wobble position (U34) of certain tRNAs, forming tRNA-cmnm(5)s(2)U34. This Streptococcus thermophilus (strain CNRZ 1066) protein is tRNA uridine 5-carboxymethylaminomethyl modification enzyme MnmG.